Reading from the N-terminus, the 342-residue chain is UDP-3-O-(3-hydroxymyristoyl)glucosamine N-acyltransferase (342 aa).

Catalysis depends on His-239, which acts as the Proton acceptor.

The protein belongs to the transferase hexapeptide repeat family. LpxD subfamily. In terms of assembly, homotrimer.

It catalyses the reaction a UDP-3-O-[(3R)-3-hydroxyacyl]-alpha-D-glucosamine + a (3R)-hydroxyacyl-[ACP] = a UDP-2-N,3-O-bis[(3R)-3-hydroxyacyl]-alpha-D-glucosamine + holo-[ACP] + H(+). It carries out the reaction UDP-3-O-[(3R)-3-hydroxytetradecanoyl]-alpha-D-glucosamine + (3R)-hydroxytetradecanoyl-[ACP] = UDP-2-N,3-O-bis[(3R)-3-hydroxytetradecanoyl]-alpha-D-glucosamine + holo-[ACP] + H(+). It participates in glycolipid biosynthesis; lipid IV(A) biosynthesis; lipid IV(A) from (3R)-3-hydroxytetradecanoyl-[acyl-carrier-protein] and UDP-N-acetyl-alpha-D-glucosamine: step 3/6. Functionally, catalyzes the N-acylation of UDP-3-O-(hydroxytetradecanoyl)glucosamine using 3-hydroxytetradecanoyl-ACP as the acyl donor. Is involved in the biosynthesis of lipid A, a phosphorylated glycolipid that anchors the lipopolysaccharide to the outer membrane of the cell. This chain is UDP-3-O-(3-hydroxymyristoyl)glucosamine N-acyltransferase, found in Photorhabdus laumondii subsp. laumondii (strain DSM 15139 / CIP 105565 / TT01) (Photorhabdus luminescens subsp. laumondii).